The following is a 258-amino-acid chain: MKKTATPKLRLLLSNDDGVYAKGLAILAKTLADLGEVDVVAPDRNRSGASNSLTLNAPLHIKNLENGMISVEGTPTDCVHLAITGVLPEMPDMVVAGINAGPNLGDDVWYSGTVAAAMEGRFLGLPALAVSLGGELFRYYETAAKVVYQLIQRIEKDSLPPSTILNINVPDLPYEELKGFEVTRLGTRHRAEPTIRQIDPRGHPIYWVGAAGPEQDSGPGTDFFAMNHHCVSITPLRVDLTHYEAFDQLASWVKRLEM.

A divalent metal cation-binding residues include Asp-16, Asp-17, Ser-47, and Asn-99.

Belongs to the SurE nucleotidase family. The cofactor is a divalent metal cation.

The protein localises to the cytoplasm. It carries out the reaction a ribonucleoside 5'-phosphate + H2O = a ribonucleoside + phosphate. Functionally, nucleotidase that shows phosphatase activity on nucleoside 5'-monophosphates. This is 5'-nucleotidase SurE from Coxiella burnetii (strain Dugway 5J108-111).